The following is a 321-amino-acid chain: Protein-L-isoaspartate O-methyltransferase (321 aa).

The segment covering 21–31 (KPAERQREKRI) has biased composition (basic and acidic residues). The segment at 21–65 (KPAERQREKRISSGVNAVSLPTPARTASAERASSTPAPGPGPQRV) is disordered. Low complexity predominate over residues 41 to 56 (PTPARTASAERASSTP). S153 is a catalytic residue.

This sequence belongs to the methyltransferase superfamily. L-isoaspartyl/D-aspartyl protein methyltransferase family.

Its subcellular location is the cytoplasm. It carries out the reaction [protein]-L-isoaspartate + S-adenosyl-L-methionine = [protein]-L-isoaspartate alpha-methyl ester + S-adenosyl-L-homocysteine. In terms of biological role, catalyzes the methyl esterification of L-isoaspartyl residues in peptides and proteins that result from spontaneous decomposition of normal L-aspartyl and L-asparaginyl residues. It plays a role in the repair and/or degradation of damaged proteins. The chain is Protein-L-isoaspartate O-methyltransferase from Ralstonia nicotianae (strain ATCC BAA-1114 / GMI1000) (Ralstonia solanacearum).